The primary structure comprises 500 residues: Glycerol kinase (500 aa).

T13 contributes to the ADP binding site. T13, T14, and S15 together coordinate ATP. T13 is a binding site for sn-glycerol 3-phosphate. R17 is an ADP binding site. Sn-glycerol 3-phosphate-binding residues include R83, E84, Y135, and D245. Residues R83, E84, Y135, D245, and Q246 each coordinate glycerol. The ADP site is built by T267 and G310. Positions 267, 310, 314, and 411 each coordinate ATP. 2 residues coordinate ADP: G411 and N415.

It belongs to the FGGY kinase family. Homotetramer and homodimer (in equilibrium).

The catalysed reaction is glycerol + ATP = sn-glycerol 3-phosphate + ADP + H(+). It functions in the pathway polyol metabolism; glycerol degradation via glycerol kinase pathway; sn-glycerol 3-phosphate from glycerol: step 1/1. Activated by phosphorylation and inhibited by fructose 1,6-bisphosphate (FBP). Key enzyme in the regulation of glycerol uptake and metabolism. Catalyzes the phosphorylation of glycerol to yield sn-glycerol 3-phosphate. This chain is Glycerol kinase, found in Carboxydothermus hydrogenoformans (strain ATCC BAA-161 / DSM 6008 / Z-2901).